An 8797-amino-acid chain; its full sequence is Nesprin-1 (8797 aa).

The segment at 1–289 is actin-binding; sequence MATSRGASRC…KHYPDIHNAS (289 aa). Over 1-8746 the chain is Cytoplasmic; that stretch reads MATSRGASRC…GRGFLFRVLR (8746 aa). Calponin-homology (CH) domains lie at 27-134 and 178-283; these read IVQK…LYFQ and GNAK…KHYP. Spectrin repeat units follow at residues 314 to 397, 398 to 502, 503 to 609, 610 to 703, 704 to 815, 816 to 923, 924 to 1024, 1025 to 1122, 1123 to 1246, 1247 to 1335, 1336 to 1444, 1445 to 1550, 1551 to 1653, 1654 to 1763, 1764 to 1879, 1880 to 1976, 1977 to 2081, 2082 to 2195, 2196 to 2303, 2304 to 2401, 2402 to 2513, 2514 to 2619, 2620 to 2731, 2732 to 2838, 2839 to 2962, 2963 to 3062, 3063 to 3171, 3172 to 3275, 3276 to 3387, 3388 to 3490, 3491 to 3593, 3594 to 3720, 3721 to 3814, 3815 to 3920, 3921 to 4028, 4029 to 4139, 4140 to 4235, 4236 to 4339, 4340 to 4451, 4452 to 4560, 4561 to 4669, 4670 to 4776, 4777 to 4882, 4883 to 4991, 4992 to 5099, 5100 to 5209, 5210 to 5318, 5319 to 5424, 5425 to 5522, 5523 to 5630, 5631 to 5736, and 5737 to 5842; these read REDR…SRLF, DWHI…HLMK, MEFL…SMLE, EVIS…YAQA, DEMD…QLLI, PLEE…KHVE, TNSR…HLKI, DVEK…LMED, PDKW…NSLE, ELIS…ERRI, QVTL…MEMV, KTKW…ILGH, LSQQ…LENL, LAHW…LQSV, VAEH…SHAS, LSGI…ADAL, AVLK…QGQC, CGLI…LRVS, LSIW…KDFT, AQST…KTQA, SLQE…LQDC, ASEL…LRSC, QVAL…LESV, ISQW…VEEI, VKDH…SGQV, AQLE…QNKE, QILQ…LENL, KIQM…VSRL, DRIV…LEGA, LSKW…SEKL, VRLH…RTQF, NNVV…YSDW, YGST…LEKG, LHLA…LEAK, VKDH…QRMY, QSLE…KHLK, SELW…REED, LQRT…IQVS, VTNL…LNKA, LSEK…LEKN, LVSR…VQEA, ILAR…LEDT, TSAY…CESR, MVQS…LTEI, YSQC…LQRC, TAQW…LEDA, VDEW…GKLV, KQEL…EQSK, ATSQ…LSKL, NQAA…LQDA, AKDM…MQEA, and VVQY…PSAH. Residues 314 to 8666 are a coiled coil; that stretch reads REDRVIFKEM…EKLLDVSSSQ (8353 aa). Phosphoserine is present on S732. Position 2270 is a phosphothreonine (T2270). S5657 carries the phosphoserine modification. The tract at residues 5859–5886 is disordered; it reads PVTEESGEEGTNSEISSPPACRSPSPVA. 19 Spectrin repeats span residues 5962 to 6071, 6072 to 6178, 6374 to 6485, 6486 to 6581, 6582 to 6691, 6692 to 6795, 6796 to 6902, 6903 to 7020, 7021 to 7128, 7129 to 7237, 7238 to 7350, 7351 to 7454, 7455 to 7558, 7559 to 7671, 7672 to 7783, 7784 to 7883, 7884 to 7997, 7998 to 8106, and 8107 to 8216; these read LERQ…LEEK, LNDQ…SLLE, RQSI…RLQQ, ILNF…RSGL, NQNL…LETW, SHLD…TILK, HWTR…QEKL, HQLQ…LEGL, LESW…LKSV, LDQW…SKAL, LQLW…LQAG, VLDY…LQSF, LLQH…RGII, DSQI…LAFL, LKDW…NEWA, VFSE…LKET, LVAV…IEET, WRLW…LKHF, and IGQR…LPLP. S8223 is modified (phosphoserine). The disordered stretch occupies residues 8246-8279; that stretch reads DSLLSPQPSSNLSLSLAQPLRSERSGRDTPASVD. Positions 8247-8265 are enriched in low complexity; sequence SLLSPQPSSNLSLSLAQPL. T8274 carries the phosphothreonine modification. Residues S8277, S8280, and S8305 each carry the phosphoserine modification. 3 Spectrin repeats span residues 8329 to 8438, 8439 to 8548, and 8549 to 8666; these read SALE…MKQN, LQKW…LQDA, and LMQC…SSSQ. A Phosphothreonine modification is found at T8360. Positions 8671 to 8734 are disordered; that stretch reads SWSSADELDT…DSSLSEPGPG (64 aa). Composition is skewed to polar residues over residues 8680-8696 and 8704-8729; these read TSGS…PNRQ and SLSQ…SSLS. The 60-residue stretch at 8738-8797 folds into the KASH domain; the sequence is RGFLFRVLRAALPLQLLLLLLIGLACLVPMSEEDYSCALSNNFARSFHPMLRYTNGPPPL. Residues 8747 to 8767 traverse the membrane as a helical; Anchor for type IV membrane protein segment; it reads AALPLQLLLLLLIGLACLVPM. Topologically, residues 8768-8797 are perinuclear space; it reads SEEDYSCALSNNFARSFHPMLRYTNGPPPL.

The protein belongs to the nesprin family. In terms of assembly, core component of LINC complexes which are composed of inner nuclear membrane SUN domain-containing proteins coupled to outer nuclear membrane KASH domain-containing nesprins. SUN and KASH domain-containing proteins seem to bind each other promiscuously; however, differentially expression of LINC complex constituents can give rise to specific assemblies. At least SUN1/2-containing core LINC complexes are proposed to be hexameric composed of three protomers of each KASH and SUN domain-containing protein. The SUN2:SYNE1/KASH1 LINC complex is a heterohexamer; the homotrimeric cloverleave-like conformation of the SUN domain is a prerequisite for LINC complex formation in which three separate SYNE1/KASH1 peptides bind at the interface of adjacent SUN domains. Self-associates. Interacts with SYNE3. Interacts with SPAG4/SUN4. May interact with MUSK. Interacts with F-actin via its N-terminal domain. Interacts with EMD and LMNA in vitro. Interacts (via KASH domain) with TMEM258. Post-translationally, the disulfid bond with SUN1 or SUN2 is required for stability of the respective LINC complex under tensile forces. Expressed in HeLa, A431, A172 and HaCaT cells (at protein level). Widely expressed. Highly expressed in skeletal and smooth muscles, heart, spleen, peripheral blood leukocytes, pancreas, cerebellum, stomach, kidney and placenta. Isoform GSRP-56 is predominantly expressed in heart and skeletal muscle (at protein level).

The protein localises to the nucleus outer membrane. It is found in the nucleus. The protein resides in the nucleus envelope. It localises to the cytoplasm. Its subcellular location is the cytoskeleton. The protein localises to the myofibril. It is found in the sarcomere. The protein resides in the golgi apparatus. Multi-isomeric modular protein which forms a linking network between organelles and the actin cytoskeleton to maintain the subcellular spatial organization. As a component of the LINC (LInker of Nucleoskeleton and Cytoskeleton) complex involved in the connection between the nuclear lamina and the cytoskeleton. The nucleocytoplasmic interactions established by the LINC complex play an important role in the transmission of mechanical forces across the nuclear envelope and in nuclear movement and positioning. May be involved in nucleus-centrosome attachment and nuclear migration in neural progenitors implicating LINC complex association with SUN1/2 and probably association with cytoplasmic dynein-dynactin motor complexes; SYNE1 and SYNE2 may act redundantly. Required for centrosome migration to the apical cell surface during early ciliogenesis. May be involved in nuclear remodeling during sperm head formation in spermatogenesis; a probable SUN3:SYNE1/KASH1 LINC complex may tether spermatid nuclei to posterior cytoskeletal structures such as the manchette. This is Nesprin-1 from Homo sapiens (Human).